A 1380-amino-acid polypeptide reads, in one-letter code: Hepatocyte growth factor receptor (1380 aa).

The first 24 residues, 1–24 (MKAPAALAPGILVLLLTLVQKGGG), serve as a signal peptide directing secretion. The Extracellular portion of the chain corresponds to 25-931 (ECREALAKSE…VIVQPDQNFT (907 aa)). The 487-residue stretch at 27 to 513 (REALAKSEMN…TGKKITKIPL (487 aa)) folds into the Sema domain. Asn-45 is a glycosylation site (N-linked (GlcNAc...) asparagine). 4 cysteine pairs are disulfide-bonded: Cys-95–Cys-101, Cys-98–Cys-156, Cys-129–Cys-137, and Cys-170–Cys-173. N-linked (GlcNAc...) asparagine glycosylation is present at Asn-200. Disulfide bonds link Cys-296-Cys-361 and Cys-383-Cys-395. N-linked (GlcNAc...) asparagine glycosylation is found at Asn-397 and Asn-403. 4 disulfide bridges follow: Cys-518–Cys-536, Cys-524–Cys-559, Cys-527–Cys-543, and Cys-539–Cys-549. A glycan (N-linked (GlcNAc...) asparagine) is linked at Asn-551. 3 IPT/TIG domains span residues 561–654 (PTIY…FSYV), 656–738 (PEIT…FSYQ), and 741–835 (PLVV…LIYV). Thr-580 carries O-linked (Man) threonine glycosylation. Asn-592, Asn-605, and Asn-633 each carry an N-linked (GlcNAc...) asparagine glycan. O-linked (Man) threonine glycans are attached at residues Thr-675 and Thr-760. 3 N-linked (GlcNAc...) asparagine glycosylation sites follow: Asn-784, Asn-878, and Asn-929. The chain crosses the membrane as a helical span at residues 932-954 (GLIVGVVSISVILLSSLGLFLWL). Residues 955-1380 (KKRKQIKDLG…HDTVDGEVDT (426 aa)) lie on the Cytoplasmic side of the membrane. Residue Ser-965 is modified to Phosphoserine. Thr-976 is subject to Phosphothreonine. Phosphoserine is present on residues Ser-989, Ser-996, and Ser-999. Tyr-1002 is modified (phosphotyrosine). In terms of domain architecture, Protein kinase spans 1077-1344 (VHFNEVIGRG…RISAIFSTFI (268 aa)). ATP-binding positions include 1083–1091 (IGRGHFGCV) and Lys-1109. Catalysis depends on Asp-1203, which acts as the Proton acceptor. Residues 1211–1380 (LDGKFTVKVA…HDTVDGEVDT (170 aa)) form an interaction with RANBP9 region. Position 1229 is a phosphotyrosine (Tyr-1229). 2 positions are modified to phosphotyrosine; by autocatalysis: Tyr-1233 and Tyr-1234. Residue Thr-1288 is modified to Phosphothreonine. The interval 1319-1358 (WHPKAEMRPSFTELVSRISAIFSTFIGEHYVHVNATYVNV) is interaction with MUC20. Phosphotyrosine; by autocatalysis occurs at positions 1348 and 1355. Tyr-1364 is modified (phosphotyrosine).

It belongs to the protein kinase superfamily. Tyr protein kinase family. Heterodimer made of an alpha chain (50 kDa) and a beta chain (145 kDa) which are disulfide linked. Binds PLXNB1. Interacts when phosphorylated with downstream effectors including STAT3, PIK3R1, SRC, PCLG1, GRB2 and GAB1. Interacts with SPSB1, SPSB2 and SPSB4. Interacts with INPP5D/SHIP1. When phosphorylated at Tyr-1355, interacts with INPPL1/SHIP2. Interacts with RANBP9 and RANBP10, as well as SPSB1, SPSB2, SPSB3 and SPSB4. SPSB1 binding occurs in the presence and in the absence of HGF, however HGF treatment has a positive effect on this interaction. Interacts with MUC20; prevents interaction with GRB2 and suppresses hepatocyte growth factor-induced cell proliferation. Interacts with GRB10. Interacts with PTPN1 and PTPN2. Interacts with HSP90AA1 and HSP90AB1; the interaction suppresses MET kinase activity. Interacts with tensin TNS3. Interacts (when phosphorylated) with tensin TNS4 (via SH2 domain); the interaction increases MET protein stability by inhibiting MET endocytosis and subsequent lysosomal degradation. Post-translationally, autophosphorylated in response to ligand binding on Tyr-1233 and Tyr-1234 in the kinase domain leading to further phosphorylation of Tyr-1348 and Tyr-1355 in the C-terminal multifunctional docking site. Dephosphorylated by PTPRJ at Tyr-1348 and Tyr-1364. Dephosphorylated by PTPN1 and PTPN2. In terms of processing, ubiquitinated. Ubiquitination by CBL regulates the receptor stability and activity through proteasomal degradation. O-mannosylation of IPT/TIG domains by TMEM260 is required for protein maturation. O-mannosylated residues are composed of single mannose glycans that are not elongated or modified.

It localises to the membrane. The enzyme catalyses L-tyrosyl-[protein] + ATP = O-phospho-L-tyrosyl-[protein] + ADP + H(+). Its activity is regulated as follows. In its inactive state, the C-terminal tail interacts with the catalytic domain and inhibits the kinase activity. Upon ligand binding, the C-terminal tail is displaced and becomes phosphorylated, thus increasing the kinase activity. Its function is as follows. Receptor tyrosine kinase that transduces signals from the extracellular matrix into the cytoplasm by binding to hepatocyte growth factor/HGF ligand. Regulates many physiological processes including proliferation, scattering, morphogenesis and survival. Ligand binding at the cell surface induces autophosphorylation of MET on its intracellular domain that provides docking sites for downstream signaling molecules. Following activation by ligand, interacts with the PI3-kinase subunit PIK3R1, PLCG1, SRC, GRB2, STAT3 or the adapter GAB1. Recruitment of these downstream effectors by MET leads to the activation of several signaling cascades including the RAS-ERK, PI3 kinase-AKT, or PLCgamma-PKC. The RAS-ERK activation is associated with the morphogenetic effects while PI3K/AKT coordinates prosurvival effects. During embryonic development, MET signaling plays a role in gastrulation, development and migration of muscles and neuronal precursors, angiogenesis and kidney formation. In adults, participates in wound healing as well as organ regeneration and tissue remodeling. Also promotes differentiation and proliferation of hematopoietic cells. This Echinops telfairi (Lesser hedgehog tenrec) protein is Hepatocyte growth factor receptor (MET).